The sequence spans 188 residues: Inosine triphosphate pyrophosphatase (188 aa).

Threonine 7–lysine 12 serves as a coordination point for ITP. Glutamate 36 serves as a coordination point for Mg(2+). ITP is bound by residues lysine 48, aspartate 64 to threonine 65, lysine 81, phenylalanine 140 to asparagine 143, lysine 163, and histidine 168 to arginine 169.

Belongs to the HAM1 NTPase family. As to quaternary structure, homodimer. It depends on Mg(2+) as a cofactor. Requires Mn(2+) as cofactor.

It localises to the cytoplasm. It is found in the nucleus. It carries out the reaction ITP + H2O = IMP + diphosphate + H(+). The catalysed reaction is dITP + H2O = dIMP + diphosphate + H(+). It catalyses the reaction XTP + H2O = XMP + diphosphate + H(+). Functionally, pyrophosphatase that hydrolyzes non-canonical purine nucleotides such as inosine triphosphate (ITP), deoxyinosine triphosphate (dITP) or xanthosine 5'-triphosphate (XTP) to their respective monophosphate derivatives. The enzyme does not distinguish between the deoxy- and ribose forms. Probably excludes non-canonical purines from RNA and DNA precursor pools, thus preventing their incorporation into RNA and DNA and avoiding chromosomal lesions. The sequence is that of Inosine triphosphate pyrophosphatase from Yarrowia lipolytica (strain CLIB 122 / E 150) (Yeast).